Reading from the N-terminus, the 162-residue chain is Tegument protein BLRF2 (162 aa).

A coiled-coil region spans residues 12–43 (VKAVDMSMEDMAARLARLESENKALKQQVLRG). The tract at residues 118–162 (SMLGAKGQPSPGEGTRPRESNDPNATRRARSRSRGREAKKVQISD) is disordered. Over residues 151–162 (RGREAKKVQISD) the composition is skewed to basic and acidic residues.

It belongs to the herpesviridae BLRF2 family. Homooligomer; homooligomerizes and binds double-stranded DNA (dsDNA) cooperatively. Interacts with host CGAS.

It is found in the virion tegument. The protein resides in the host cytoplasm. In terms of biological role, plays a role in the inhibition of host innate immune system by targeting the CGAS enzymatic activity which is the principal cytosolic DNA sensor that detects invading viral DNA. Acts by inhibiting CGAS-DNA phase separation: directly binds double-stranded DNA (dsDNA) in a length dependent but sequence independent manner and is able to form DNA-induced phase separation in infected cells. DNA phase separation of ORF52 mediates disruption of liquid-like droplets in which CGAS is activated, thereby preventing CGAS activity. This Homo sapiens (Human) protein is Tegument protein BLRF2.